A 506-amino-acid polypeptide reads, in one-letter code: Conglutin alpha 1 (506 aa).

Positions 1–19 (MANKLLALSLFLLFSGCFA) are cleaved as a signal peptide. Intrachain disulfides connect C31–C64 and C107–C328. The Cupin type-1 1 domain occupies 36 to 235 (LNALEPDNSV…AFSVDREIVR (200 aa)). 3 disordered regions span residues 111–131 (YEEP…RHQK), 195–216 (QQKE…NVLS), and 251–322 (VKEG…DRNG). Over residues 195–207 (QQKEGGQGQQQEG) the composition is skewed to low complexity. The span at 270–280 (EEEEEEEEEEE) shows a compositional bias: acidic residues. Over residues 306-315 (QVRRVRRPHH) the composition is skewed to basic residues. In terms of domain architecture, Cupin type-1 2 spans 334-483 (HNIGQSTSPD…AFNLDRDQAR (150 aa)). 2 N-linked (GlcNAc...) asparagine glycosylation sites follow: N397 and N439.

This sequence belongs to the 11S seed storage protein (globulins) family. In terms of assembly, hexamer; each subunit is composed of an acidic and a basic chain derived from a single precursor and linked by a disulfide bond. Component of globulins complexes which accumulate in seeds. Expressed in developing cotyledons and in the embryonic axis of germinating seeds.

Its function is as follows. Sulfur-rich seed storage protein. This protein found in the seeds of many leguminous and non-leguminous plants is the source of sulfur-containing amino acids in seed meals. This chain is Conglutin alpha 1, found in Lupinus angustifolius (Narrow-leaved blue lupine).